The chain runs to 251 residues: Dehydration-responsive element-binding protein 1I (251 aa).

Positions 1–50 (MCTSKLEEITGEWPPPALQAASTTSSSEPCRRLSPPSSKRPAGRTKFHET) are disordered. Residues 54–114 (VFRGVRRRGR…GRAAACLNFA (61 aa)) constitute a DNA-binding region (AP2/ERF). Positions 169–198 (ATSEPSAASDDDAVTSSSSTTDADEEASPF) are disordered.

Belongs to the AP2/ERF transcription factor family. ERF subfamily.

The protein resides in the nucleus. Functionally, transcriptional activator that binds specifically to the DNA sequence 5'-[AG]CCGAC-3'. Binding to the C-repeat/DRE element mediates high salinity- and dehydration-inducible transcription. This Oryza sativa subsp. japonica (Rice) protein is Dehydration-responsive element-binding protein 1I (DREB1I).